Consider the following 138-residue polypeptide: ATP synthase epsilon chain (138 aa).

Belongs to the ATPase epsilon chain family. As to quaternary structure, F-type ATPases have 2 components, CF(1) - the catalytic core - and CF(0) - the membrane proton channel. CF(1) has five subunits: alpha(3), beta(3), gamma(1), delta(1), epsilon(1). CF(0) has three main subunits: a, b and c.

The protein localises to the cell inner membrane. Its function is as follows. Produces ATP from ADP in the presence of a proton gradient across the membrane. The sequence is that of ATP synthase epsilon chain from Polaromonas sp. (strain JS666 / ATCC BAA-500).